The following is a 95-amino-acid chain: Large ribosomal subunit protein bL25 (95 aa).

A disordered region spans residues 1–20 (MSFKFNAEVRSKQGKGASRR).

Belongs to the bacterial ribosomal protein bL25 family. In terms of assembly, part of the 50S ribosomal subunit; part of the 5S rRNA/L5/L18/L25 subcomplex. Contacts the 5S rRNA. Binds to the 5S rRNA independently of L5 and L18.

In terms of biological role, this is one of the proteins that binds to the 5S RNA in the ribosome where it forms part of the central protuberance. The chain is Large ribosomal subunit protein bL25 from Histophilus somni (strain 129Pt) (Haemophilus somnus).